The following is a 423-amino-acid chain: Probable histone-binding protein rbbD (423 aa).

WD repeat units follow at residues 119–159 (NHEG…LEPT), 172–212 (GHKK…KSDS), 222–262 (GHTS…KPIH), 266–306 (AHNS…NRLH), 310–350 (SHTD…EEQN), and 367–407 (GHTS…YNDR).

The protein belongs to the WD repeat RBAP46/RBAP48/MSI1 family. As to quaternary structure, probably binds directly to helix 1 of the histone fold of histone H4, a region that is not accessible when H4 is in chromatin.

It localises to the nucleus. Core histone-binding subunit that may target chromatin assembly factors, chromatin remodeling factors and histone deacetylases to their histone substrates in a manner that is regulated by nucleosomal DNA. Component of several complexes which regulate chromatin metabolism. In Dictyostelium discoideum (Social amoeba), this protein is Probable histone-binding protein rbbD (rbbD).